Consider the following 139-residue polypeptide: Desampylase (139 aa).

The 134-residue stretch at 6 to 139 (LSLAADARDS…EFRELSVAVE (134 aa)) folds into the MPN domain. The Proton donor/acceptor role is filled by Glu31. Zn(2+) contacts are provided by His88, His90, and Asp101. Residues 88–101 (HSHPESDPVPSATD) carry the JAMM motif motif.

This sequence belongs to the peptidase M67B family. In terms of assembly, monomer. It depends on Zn(2+) as a cofactor.

It carries out the reaction an N(6)-[small archaeal modifier protein]-[protein]-L-lysine + H2O = a [protein]-L-lysine + a [small archaeal modifier protein].. Inhibited by EDTA and N-ethylmaleimide (NEM) in vitro. Metalloprotease that displays desampylase (DSAMP) activity, cleaving ubiquitin-like small archaeal modifier proteins (SAMP1, SAMP2 and SAMP3) from protein conjugates (isopeptide- and linear-linked). Thus, likely regulates sampylation and the pools of 'free' SAMP available for protein modification. Functions as a specific and not a general protease since it is unable to hydrolyze a variety of unmodified proteins otherwise hydrolyzed by proteinase K. The sequence is that of Desampylase from Haloferax volcanii (strain ATCC 29605 / DSM 3757 / JCM 8879 / NBRC 14742 / NCIMB 2012 / VKM B-1768 / DS2) (Halobacterium volcanii).